The sequence spans 284 residues: Bifunctional protein FolD 1 (284 aa).

NADP(+)-binding positions include 166-168 (GAS) and Ile232.

It belongs to the tetrahydrofolate dehydrogenase/cyclohydrolase family. Homodimer.

The enzyme catalyses (6R)-5,10-methylene-5,6,7,8-tetrahydrofolate + NADP(+) = (6R)-5,10-methenyltetrahydrofolate + NADPH. It catalyses the reaction (6R)-5,10-methenyltetrahydrofolate + H2O = (6R)-10-formyltetrahydrofolate + H(+). It participates in one-carbon metabolism; tetrahydrofolate interconversion. Its function is as follows. Catalyzes the oxidation of 5,10-methylenetetrahydrofolate to 5,10-methenyltetrahydrofolate and then the hydrolysis of 5,10-methenyltetrahydrofolate to 10-formyltetrahydrofolate. This chain is Bifunctional protein FolD 1, found in Pseudomonas syringae pv. tomato (strain ATCC BAA-871 / DC3000).